The chain runs to 427 residues: Histidinol dehydrogenase (427 aa).

Tyrosine 123, glutamine 185, and asparagine 208 together coordinate NAD(+). Residues serine 231, glutamine 253, and histidine 256 each coordinate substrate. Residues glutamine 253 and histidine 256 each coordinate Zn(2+). Residues glutamate 321 and histidine 322 each act as proton acceptor in the active site. Substrate-binding residues include histidine 322, aspartate 355, glutamate 409, and histidine 414. Aspartate 355 contributes to the Zn(2+) binding site. Histidine 414 is a Zn(2+) binding site.

It belongs to the histidinol dehydrogenase family. Zn(2+) is required as a cofactor.

The catalysed reaction is L-histidinol + 2 NAD(+) + H2O = L-histidine + 2 NADH + 3 H(+). The protein operates within amino-acid biosynthesis; L-histidine biosynthesis; L-histidine from 5-phospho-alpha-D-ribose 1-diphosphate: step 9/9. Functionally, catalyzes the sequential NAD-dependent oxidations of L-histidinol to L-histidinaldehyde and then to L-histidine. This chain is Histidinol dehydrogenase (hisD), found in Bacillus subtilis (strain 168).